A 153-amino-acid polypeptide reads, in one-letter code: Phosphoribosyl-AMP cyclohydrolase (153 aa).

Asp93 is a Mg(2+) binding site. Residue Cys94 participates in Zn(2+) binding. The Mg(2+) site is built by Asp95 and Asp97. Zn(2+) is bound by residues Cys112 and Cys119.

This sequence belongs to the PRA-CH family. Homodimer. Requires Mg(2+) as cofactor. Zn(2+) is required as a cofactor.

It is found in the cytoplasm. It catalyses the reaction 1-(5-phospho-beta-D-ribosyl)-5'-AMP + H2O = 1-(5-phospho-beta-D-ribosyl)-5-[(5-phospho-beta-D-ribosylamino)methylideneamino]imidazole-4-carboxamide. It functions in the pathway amino-acid biosynthesis; L-histidine biosynthesis; L-histidine from 5-phospho-alpha-D-ribose 1-diphosphate: step 3/9. In terms of biological role, catalyzes the hydrolysis of the adenine ring of phosphoribosyl-AMP. The sequence is that of Phosphoribosyl-AMP cyclohydrolase from Mesorhizobium japonicum (strain LMG 29417 / CECT 9101 / MAFF 303099) (Mesorhizobium loti (strain MAFF 303099)).